A 239-amino-acid polypeptide reads, in one-letter code: Ribosomal RNA small subunit methyltransferase G (239 aa).

S-adenosyl-L-methionine-binding positions include Gly-76, Phe-81, 99–101, 128–129, and Arg-147; these read DSS and IE.

It belongs to the methyltransferase superfamily. RNA methyltransferase RsmG family.

It is found in the cytoplasm. In terms of biological role, specifically methylates the N7 position of a guanine in 16S rRNA. This is Ribosomal RNA small subunit methyltransferase G from Prochlorococcus marinus subsp. pastoris (strain CCMP1986 / NIES-2087 / MED4).